We begin with the raw amino-acid sequence, 163 residues long: MASTFSFDIVSDFDWQELVNAVDQTGREIKARYDLKDTQTALELTKEGLTIHTDSEFTLNSVQTILQQKAAKRQLSLKIFDYGPVEAAGGQRVKQLIKLRRGIPSELAKEISKLIRNEFKKVQASIQGDVVRVSAKSKDDLQAVIQRLKTQDYPVPLQFTNYR.

Belongs to the YajQ family.

Functionally, nucleotide-binding protein. This chain is Nucleotide-binding protein tll0793, found in Thermosynechococcus vestitus (strain NIES-2133 / IAM M-273 / BP-1).